Consider the following 236-residue polypeptide: Large ribosomal subunit protein eL6 (236 aa).

It belongs to the eukaryotic ribosomal protein eL6 family.

The protein is Large ribosomal subunit protein eL6 (rpl6) of Dictyostelium discoideum (Social amoeba).